A 473-amino-acid polypeptide reads, in one-letter code: Ribulose bisphosphate carboxylase large chain (473 aa).

2 residues coordinate substrate: asparagine 116 and threonine 166. Lysine 168 (proton acceptor) is an active-site residue. Residue lysine 170 participates in substrate binding. Mg(2+)-binding residues include lysine 194, aspartate 196, and glutamate 197. The residue at position 194 (lysine 194) is an N6-carboxylysine. The active-site Proton acceptor is histidine 287. Arginine 288, histidine 320, and serine 372 together coordinate substrate.

Belongs to the RuBisCO large chain family. Type I subfamily. Heterohexadecamer of 8 large chains and 8 small chains. Requires Mg(2+) as cofactor.

It carries out the reaction 2 (2R)-3-phosphoglycerate + 2 H(+) = D-ribulose 1,5-bisphosphate + CO2 + H2O. The catalysed reaction is D-ribulose 1,5-bisphosphate + O2 = 2-phosphoglycolate + (2R)-3-phosphoglycerate + 2 H(+). RuBisCO catalyzes two reactions: the carboxylation of D-ribulose 1,5-bisphosphate, the primary event in carbon dioxide fixation, as well as the oxidative fragmentation of the pentose substrate. Both reactions occur simultaneously and in competition at the same active site. This is Ribulose bisphosphate carboxylase large chain from Hydrogenophaga pseudoflava (Pseudomonas carboxydoflava).